Here is a 405-residue protein sequence, read N- to C-terminus: Acetyl-CoA decarbonylase/synthase complex subunit delta (405 aa).

This sequence belongs to the CdhD family. As to quaternary structure, heterodimer of delta and gamma chains. The ACDS complex is made up of alpha, epsilon, beta, gamma and delta chains with a probable stoichiometry of (alpha(2)epsilon(2))(4)-beta(8)-(gamma(1)delta(1))(8).

Its function is as follows. Part of a complex that catalyzes the reversible cleavage of acetyl-CoA, allowing autotrophic growth from CO(2). Probably maintains the overall quaternary structure of the ACDS complex. The protein is Acetyl-CoA decarbonylase/synthase complex subunit delta of Methanocaldococcus jannaschii (strain ATCC 43067 / DSM 2661 / JAL-1 / JCM 10045 / NBRC 100440) (Methanococcus jannaschii).